A 278-amino-acid chain; its full sequence is Ras-related protein Rab-40B (278 aa).

Residues S23, G26, and K27 each coordinate GTP. The segment at 41–49 is switch-I; that stretch reads SPYGHPAGI. Residue D69 coordinates Mg(2+). GTP contacts are provided by G72, N126, and R127. Positions 72–88 are switch-II; sequence GQGRFCTIFRSYSRGAQ. Residues 175–228 enclose the SOCS box domain; that stretch reads LLRHGMDRLWRPSKVLSLQDLCCRAVVSCTPVHLVDKLPLPIALRSHLKSFSMA. The interval 242-278 is disordered; that stretch reads SLTTSSTHKRSSLRKVKLVRPPQSPPKNCTRNSCKIS. The span at 248–259 shows a compositional bias: basic residues; sequence THKRSSLRKVKL. Positions 267–278 are enriched in polar residues; that stretch reads PKNCTRNSCKIS. C270 carries the S-palmitoyl cysteine lipid modification. C275 is lipidated: S-geranylgeranyl cysteine.

This sequence belongs to the small GTPase superfamily. Rab family. In terms of assembly, component of the cullin-5-RING E3 ubiquitin-protein ligase complex (ECS(RAB40B) complex) composed of CUL5, Elongin BC (ELOB and ELOC), RNF7/RBX2 and RAB40B; RAB40B interaction with ECS complex is GTP-independent. Binds (GTP-bound) LIMA1; interaction promotes LIMA1 subcellular localization in lamellipodia during cell migration. Interacts (GTP-bound) with TKS5/SH3PXD2A (via PX domain); interaction promotes invadopodia-mediated extracellular matrix degradation. It depends on Mg(2+) as a cofactor.

It localises to the cell membrane. The protein resides in the cytoplasm. Its subcellular location is the cytosol. The protein localises to the cell projection. It is found in the lamellipodium membrane. It localises to the ruffle. It carries out the reaction GTP + H2O = GDP + phosphate + H(+). It participates in protein modification; protein ubiquitination. Its activity is regulated as follows. Regulated by guanine nucleotide exchange factors (GEFs) which promote the exchange of bound GDP for free GTP. Regulated by GTPase activating proteins (GAPs) which increase the GTP hydrolysis activity. Inhibited by GDP dissociation inhibitors (GDIs). In terms of biological role, RAB40B small GTPase acts as substrate-recognition components of the ECS(RAB40B) E3 ubiquitin ligase complex which mediates the ubiquitination of target proteins. The Rab40 subfamily belongs to the Rab family that are key regulators of intracellular membrane trafficking, from the formation of transport vesicles to their fusion with membranes. Rabs cycle between an inactive GDP-bound form and an active GTP-bound form that is able to recruit to membranes different sets of downstream effectors directly responsible for vesicle formation, movement, tethering and fusion. As part of the ECS(RAB40B) complex, GTP-bound RAB40B promotes LIMA1/EPLIN ubiquitination and degradation, thereby regulating leading-edge actin dynamics during cell migration. As part of the ECS(RAB40B) complex, GTP-bound RAB40B also ubiquitinates RAP2A GTPase which promotes its localization to lamellipodia and activation to drive cell migration. The ECS(RAB40B) complex does not mediate canonical ubiquitin-dependent degradation of RAP2. RAB40B also binds TKS5/SH3PXD2A effector independently from ECS complex to promote invadopodia-mediated extracellular matrix degradation. This Homo sapiens (Human) protein is Ras-related protein Rab-40B.